We begin with the raw amino-acid sequence, 986 residues long: Translation initiation factor IF-2 (986 aa).

Basic and acidic residues predominate over residues 75–94 (KRLSRLEEQSRKTYEKEQHL). Disordered stretches follow at residues 75–105 (KRLS…APPL), 127–148 (PPSK…PDAP), 185–258 (SEVP…VSFD), and 277–394 (GRHK…HEED). Low complexity-rich tracts occupy residues 185 to 210 (SEVP…ESPL) and 218 to 235 (SEPQ…LPEI). A compositionally biased stretch (basic and acidic residues) spans 292–313 (DALKDEFEPKPAEESRVEEKVV). Low complexity predominate over residues 315-338 (AKKPPVKAAADVKPKPVVADSSSS). Basic residues predominate over residues 339–348 (AKKKGKKKKK). In terms of domain architecture, tr-type G spans 483–653 (TRPPVVTIMG…LTEAEMRELR (171 aa)). Residues 492–499 (GHVDHGKT) form a G1 region. Residue 492–499 (GHVDHGKT) participates in GTP binding. Positions 517-521 (GITQH) are G2. The G3 stretch occupies residues 539 to 542 (DTPG). GTP is bound by residues 539–543 (DTPGH) and 593–596 (NKID). A G4 region spans residues 593 to 596 (NKID). Residues 629–631 (SAK) form a G5 region.

Belongs to the TRAFAC class translation factor GTPase superfamily. Classic translation factor GTPase family. IF-2 subfamily.

The protein localises to the cytoplasm. Functionally, one of the essential components for the initiation of protein synthesis. Protects formylmethionyl-tRNA from spontaneous hydrolysis and promotes its binding to the 30S ribosomal subunits. Also involved in the hydrolysis of GTP during the formation of the 70S ribosomal complex. This is Translation initiation factor IF-2 from Pelodictyon phaeoclathratiforme (strain DSM 5477 / BU-1).